A 439-amino-acid polypeptide reads, in one-letter code: Ribosomal protein uS12 methylthiotransferase RimO (439 aa).

The MTTase N-terminal domain maps to 2-114 (SKLYLMSLGC…IDEMILKKTN (113 aa)). [4Fe-4S] cluster is bound by residues Cys11, Cys45, Cys77, Cys146, Cys150, and Cys153. The 232-residue stretch at 132–363 (TGSNSHAFIK…VDEVIEKSFE (232 aa)) folds into the Radical SAM core domain.

This sequence belongs to the methylthiotransferase family. RimO subfamily. Requires [4Fe-4S] cluster as cofactor.

It localises to the cytoplasm. The catalysed reaction is L-aspartate(89)-[ribosomal protein uS12]-hydrogen + (sulfur carrier)-SH + AH2 + 2 S-adenosyl-L-methionine = 3-methylsulfanyl-L-aspartate(89)-[ribosomal protein uS12]-hydrogen + (sulfur carrier)-H + 5'-deoxyadenosine + L-methionine + A + S-adenosyl-L-homocysteine + 2 H(+). Functionally, catalyzes the methylthiolation of an aspartic acid residue of ribosomal protein uS12. The chain is Ribosomal protein uS12 methylthiotransferase RimO from Campylobacter jejuni subsp. jejuni serotype O:2 (strain ATCC 700819 / NCTC 11168).